Reading from the N-terminus, the 326-residue chain is Isoaspartyl peptidase/L-asparaginase (326 aa).

The Nucleophile role is filled by threonine 185. Substrate is bound by residues 213-216 (RVGD) and 236-239 (TGHG).

This sequence belongs to the Ntn-hydrolase family. As to quaternary structure, heterodimer of an alpha and beta chain produced by autocleavage. This heterodimer may then dimerize in turn, giving rise to a heterotetramer. Post-translationally, cleaved into an alpha and beta chain by autocatalysis; this activates the enzyme. The N-terminal residue of the beta subunit is responsible for the nucleophile hydrolase activity. As to expression, high expression in the heart and brain while low to minimal expression in the other tissues. In ocular tissues, high levels is observed in the optic nerve and retina while relatively low levels of expression are detected in the iris-ciliary body, lens or retinal pigment epithelium.

Its subcellular location is the cytoplasm. It carries out the reaction L-asparagine + H2O = L-aspartate + NH4(+). It catalyses the reaction Cleavage of a beta-linked Asp residue from the N-terminus of a polypeptide.. Functionally, has both L-asparaginase and beta-aspartyl peptidase activity. May be involved in the production of L-aspartate, which can act as an excitatory neurotransmitter in some brain regions. Is highly active with L-Asp beta-methyl ester. Besides, has catalytic activity toward beta-aspartyl dipeptides and their methyl esters, including beta-L-Asp-L-Phe, beta-L-Asp-L-Phe methyl ester (aspartame), beta-L-Asp-L-Ala, beta-L-Asp-L-Leu and beta-L-Asp-L-Lys. Does not have aspartylglucosaminidase activity and is inactive toward GlcNAc-L-Asn. Likewise, has no activity toward glutamine. The protein is Isoaspartyl peptidase/L-asparaginase (Asrgl1) of Mus musculus (Mouse).